A 128-amino-acid chain; its full sequence is Holo-[acyl-carrier-protein] synthase (128 aa).

Residues aspartate 10 and glutamate 59 each coordinate Mg(2+).

This sequence belongs to the P-Pant transferase superfamily. AcpS family. It depends on Mg(2+) as a cofactor.

It is found in the cytoplasm. It catalyses the reaction apo-[ACP] + CoA = holo-[ACP] + adenosine 3',5'-bisphosphate + H(+). Functionally, transfers the 4'-phosphopantetheine moiety from coenzyme A to a Ser of acyl-carrier-protein. The polypeptide is Holo-[acyl-carrier-protein] synthase (Syntrophotalea carbinolica (strain DSM 2380 / NBRC 103641 / GraBd1) (Pelobacter carbinolicus)).